The sequence spans 286 residues: ATP phosphoribosyltransferase (286 aa).

It belongs to the ATP phosphoribosyltransferase family. Long subfamily. Mg(2+) is required as a cofactor.

It localises to the cytoplasm. It catalyses the reaction 1-(5-phospho-beta-D-ribosyl)-ATP + diphosphate = 5-phospho-alpha-D-ribose 1-diphosphate + ATP. It participates in amino-acid biosynthesis; L-histidine biosynthesis; L-histidine from 5-phospho-alpha-D-ribose 1-diphosphate: step 1/9. With respect to regulation, feedback inhibited by histidine. In terms of biological role, catalyzes the condensation of ATP and 5-phosphoribose 1-diphosphate to form N'-(5'-phosphoribosyl)-ATP (PR-ATP). Has a crucial role in the pathway because the rate of histidine biosynthesis seems to be controlled primarily by regulation of HisG enzymatic activity. In Cytophaga hutchinsonii (strain ATCC 33406 / DSM 1761 / CIP 103989 / NBRC 15051 / NCIMB 9469 / D465), this protein is ATP phosphoribosyltransferase.